Reading from the N-terminus, the 342-residue chain is Tetraacyldisaccharide 4'-kinase (342 aa).

68–75 (TVGGTGKT) serves as a coordination point for ATP.

This sequence belongs to the LpxK family.

The enzyme catalyses a lipid A disaccharide + ATP = a lipid IVA + ADP + H(+). The protein operates within glycolipid biosynthesis; lipid IV(A) biosynthesis; lipid IV(A) from (3R)-3-hydroxytetradecanoyl-[acyl-carrier-protein] and UDP-N-acetyl-alpha-D-glucosamine: step 6/6. In terms of biological role, transfers the gamma-phosphate of ATP to the 4'-position of a tetraacyldisaccharide 1-phosphate intermediate (termed DS-1-P) to form tetraacyldisaccharide 1,4'-bis-phosphate (lipid IVA). The protein is Tetraacyldisaccharide 4'-kinase of Burkholderia lata (strain ATCC 17760 / DSM 23089 / LMG 22485 / NCIMB 9086 / R18194 / 383).